We begin with the raw amino-acid sequence, 504 residues long: MKNEKRKTGIEPKVFFPPLIIVGILCWLTVRDLDAANVVINAVFSYVTNVWGWAFEWYMVVMLFGWFWLVFGPYAKKRLGNEPPEFSTASWIFMMFASCTSAAVLFWGSIEIYYYISTPPFGLEPNSTGAKELGLAYSLFHWGPLPWATYSFLSVAFAYFFFVRKMEVIRPSSTLVPLVGEKHAKGLFGTIVDNFYLVALIFAMGTSLGLATPLVTECMQWLFGIPHTLQLDAIIITCWIILNAICVACGLQKGVRIASDVRSYLSFLMLGWVFIVSGASFIMNYFTDSVGMLLMYLPRMLFYTDPIAKGGFPQGWTVFYWAWWVIYAIQMSIFLARISRGRTVRELCFGMVLGLTASTWILWTVLGSNTLLLIDKNIINIPNLIEQYGVARAIIETWAALPLSTATIWGFFILCFIATVTLVNACSYTLAMSTCREVRDGEEPPLLVRIGWSILVGIIGIVLLALGGLKPIQTAIIAGGCPLFFVNIMVTLSFIKDAKQNWKD.

A run of 12 helical transmembrane segments spans residues 10 to 30 (IEPK…WLTV), 51 to 71 (WGWA…WLVF), 92 to 112 (IFMM…SIEI), 143 to 163 (GPLP…FFFV), 195 to 215 (FYLV…TPLV), 231 to 251 (LDAI…ACGL), 263 to 283 (SYLS…SFIM), 316 to 336 (WTVF…IFLA), 347 to 367 (LCFG…TVLG), 398 to 418 (WAAL…CFIA), 446 to 466 (LLVR…LLAL), and 475 to 495 (AIIA…LSFI).

It belongs to the BCCT transporter (TC 2.A.15) family. CaiT subfamily. As to quaternary structure, homotrimer.

Its subcellular location is the cell inner membrane. The enzyme catalyses 4-(trimethylamino)butanoate(in) + (R)-carnitine(out) = 4-(trimethylamino)butanoate(out) + (R)-carnitine(in). It functions in the pathway amine and polyamine metabolism; carnitine metabolism. Its function is as follows. Catalyzes the exchange of L-carnitine for gamma-butyrobetaine. In Escherichia coli O8 (strain IAI1), this protein is L-carnitine/gamma-butyrobetaine antiporter.